Consider the following 27-residue polypeptide: Pyruvate dehydrogenase protein X component, mitochondrial (27 aa).

The disordered stretch occupies residues 1 to 27; sequence FRLSPAARNILEKHSLDASQGTATGPR. In terms of domain architecture, Peripheral subunit-binding (PSBD) spans 2–27; it reads RLSPAARNILEKHSLDASQGTATGPR. Lys-13 is subject to N6-acetyllysine. At Ser-15 the chain carries Phosphoserine. Positions 17 to 27 are enriched in polar residues; it reads DASQGTATGPR.

Belongs to the 2-oxoacid dehydrogenase family. Part of the inner core of the multimeric pyruvate dehydrogenase complex that is composed of about 48 DLAT and 12 PDHX molecules. This core binds multiple copies of pyruvate dehydrogenase (subunits PDH1A and PDHB, E1), dihydrolipoamide acetyltransferase (DLAT, E2) and lipoamide dehydrogenase (DLD, E3). Interacts with SIRT4. Interacts with DLD.

Its subcellular location is the mitochondrion matrix. Its function is as follows. Required for anchoring dihydrolipoamide dehydrogenase (E3) to the dihydrolipoamide transacetylase (E2) core of the pyruvate dehydrogenase complexes of eukaryotes. This specific binding is essential for a functional PDH complex. This Mesocricetus auratus (Golden hamster) protein is Pyruvate dehydrogenase protein X component, mitochondrial.